Consider the following 349-residue polypeptide: Anthranilate phosphoribosyltransferase (349 aa).

5-phospho-alpha-D-ribose 1-diphosphate-binding positions include Gly86, 89–90 (GD), Thr94, 96–99 (NIST), 114–122 (KHGNKSASG), and Ser126. An anthranilate-binding site is contributed by Gly86. Ser98 serves as a coordination point for Mg(2+). Residue Asn117 coordinates anthranilate. Arg172 lines the anthranilate pocket. The Mg(2+) site is built by Asp231 and Glu232.

The protein belongs to the anthranilate phosphoribosyltransferase family. Homodimer. Mg(2+) serves as cofactor.

The enzyme catalyses N-(5-phospho-beta-D-ribosyl)anthranilate + diphosphate = 5-phospho-alpha-D-ribose 1-diphosphate + anthranilate. It functions in the pathway amino-acid biosynthesis; L-tryptophan biosynthesis; L-tryptophan from chorismate: step 2/5. Its function is as follows. Catalyzes the transfer of the phosphoribosyl group of 5-phosphorylribose-1-pyrophosphate (PRPP) to anthranilate to yield N-(5'-phosphoribosyl)-anthranilate (PRA). The chain is Anthranilate phosphoribosyltransferase from Prochlorococcus marinus (strain MIT 9312).